We begin with the raw amino-acid sequence, 365 residues long: Short-chain dehydrogenase iccH (365 aa).

NADP(+) contacts are provided by L16, R52, and D70. The N-linked (GlcNAc...) asparagine glycan is linked to N90. Positions 102, 221, 225, and 260 each coordinate NADP(+). Y221 acts as the Proton donor in catalysis. The Lowers pKa of active site Tyr role is filled by K225. The helical transmembrane segment at 267-287 (IWVMFLLMKFVLPLLAPLAVW) threads the bilayer. Residues N291 and N324 are each glycosylated (N-linked (GlcNAc...) asparagine).

This sequence belongs to the short-chain dehydrogenases/reductases (SDR) family.

Its subcellular location is the membrane. The protein operates within mycotoxin biosynthesis. Its function is as follows. NADH-dependent flavin oxidoreductase; part of the gene cluster that mediates the biosynthesis of ilicicolin H, a 4-hydroxy-2-pyridonealkaloid that has potent and broad antifungal activities by inhibiting the mitochondrial respiration chain. IccA to iccE are sufficient for ilicicolin H biosynthesis and the roles of the remaining enzymes, iccF, iccG and iccH within the pathway have still to be determined. The biosynthesis of ilicicolin H starts with formation of the tetramic acid by the hybrid PKS-NRPS synthetase iccA with the partnering trans-enoyl reductase iccB since iccA lacks a designated enoylreductase (ER) domain. The cytochrome P450 monooxygenase iccC then catalyzes the ring expansion of the tetramate to the acyclic 2-pyridone. The pericyclase iccD further converts the acyclic 2-pyridone into 8-epi-ilicicolin H. Finally, the epimerase iccE converts 8-epi-ilicicolin H into ilicicolin H via epimerizationd. The polypeptide is Short-chain dehydrogenase iccH (Talaromyces variabilis (Penicillium variabile)).